A 261-amino-acid chain; its full sequence is Putative hydro-lyase VSAL_I1435 (261 aa).

This sequence belongs to the D-glutamate cyclase family.

The polypeptide is Putative hydro-lyase VSAL_I1435 (Aliivibrio salmonicida (strain LFI1238) (Vibrio salmonicida (strain LFI1238))).